We begin with the raw amino-acid sequence, 118 residues long: Holo-[acyl-carrier-protein] synthase (118 aa).

Mg(2+) contacts are provided by aspartate 8 and glutamate 58.

It belongs to the P-Pant transferase superfamily. AcpS family. Requires Mg(2+) as cofactor.

It is found in the cytoplasm. It catalyses the reaction apo-[ACP] + CoA = holo-[ACP] + adenosine 3',5'-bisphosphate + H(+). Transfers the 4'-phosphopantetheine moiety from coenzyme A to a Ser of acyl-carrier-protein. This chain is Holo-[acyl-carrier-protein] synthase, found in Listeria monocytogenes serotype 4b (strain CLIP80459).